The sequence spans 490 residues: GTPase Der (490 aa).

2 EngA-type G domains span residues P3–L166 and I203–T376. Residues G9–S16, D56–I60, N118–D121, G209–S216, D256–V260, and N321–D324 each bind GTP. Positions R377–E461 constitute a KH-like domain.

The protein belongs to the TRAFAC class TrmE-Era-EngA-EngB-Septin-like GTPase superfamily. EngA (Der) GTPase family. In terms of assembly, associates with the 50S ribosomal subunit.

GTPase that plays an essential role in the late steps of ribosome biogenesis. The chain is GTPase Der from Shigella boydii serotype 18 (strain CDC 3083-94 / BS512).